The following is a 104-amino-acid chain: Flagellar hook-basal body complex protein FliE (104 aa).

It belongs to the FliE family.

Its subcellular location is the bacterial flagellum basal body. This is Flagellar hook-basal body complex protein FliE from Salmonella heidelberg (strain SL476).